The primary structure comprises 84 residues: MNLFDFFRGRQKQTSASVAKERLQIIVAHERGQRSEPDYLPALQKELLEVIRKYVNIGSDDVHIELENQGSCSILELNITLPDR.

This sequence belongs to the MinE family.

In terms of biological role, prevents the cell division inhibition by proteins MinC and MinD at internal division sites while permitting inhibition at polar sites. This ensures cell division at the proper site by restricting the formation of a division septum at the midpoint of the long axis of the cell. The protein is Cell division topological specificity factor of Pseudomonas putida (strain W619).